Here is a 145-residue protein sequence, read N- to C-terminus: 3-dehydroquinate dehydratase (145 aa).

Residue Y24 is the Proton acceptor of the active site. Substrate is bound by residues N76, H82, and D89. The Proton donor role is filled by H102. Substrate is bound by residues 103–104 (LS) and R113.

Belongs to the type-II 3-dehydroquinase family. Homododecamer.

It catalyses the reaction 3-dehydroquinate = 3-dehydroshikimate + H2O. It participates in metabolic intermediate biosynthesis; chorismate biosynthesis; chorismate from D-erythrose 4-phosphate and phosphoenolpyruvate: step 3/7. Functionally, catalyzes a trans-dehydration via an enolate intermediate. The polypeptide is 3-dehydroquinate dehydratase (Nitrosomonas eutropha (strain DSM 101675 / C91 / Nm57)).